Consider the following 770-residue polypeptide: Serine/threonine-protein kinase PLK4 (770 aa).

A Protein kinase domain is found at 14–267 (YEVQHLLGKG…LEHVLRHPFL (254 aa)). Residues 20-28 (LGKGGFASV) and Lys-43 each bind ATP. Catalysis depends on Asp-138, which acts as the Proton acceptor. The Cryptic POLO box 1 (CPB1) domain occupies 383–500 (EERISVPPLN…DRFVGLVKSK (118 aa)). One can recognise a Cryptic POLO box 2 (CPB2) domain in the interval 501–604 (TPKVTYFSAL…GRRPVTEVQP (104 aa)). A POLO box domain is found at 662–741 (PIKRINLPDI…LPHIQLKLKT (80 aa)).

The protein belongs to the protein kinase superfamily. Ser/Thr protein kinase family. CDC5/Polo subfamily. Homodimer. Ubiquitinated by the SCF(Slimb) ubiquitin ligase complex; leading to its degradation by the proteasome during interphase and regulating centriole number and ensuring the block to centriole reduplication.

It is found in the cytoplasm. It localises to the cytoskeleton. The protein localises to the microtubule organizing center. The protein resides in the centrosome. Its subcellular location is the centriole. The enzyme catalyses L-seryl-[protein] + ATP = O-phospho-L-seryl-[protein] + ADP + H(+). The catalysed reaction is L-threonyl-[protein] + ATP = O-phospho-L-threonyl-[protein] + ADP + H(+). Its function is as follows. Serine/threonine-protein kinase that plays a central role in centriole duplication. Able to trigger procentriole formation on the surface of the mother centriole cylinder, using mother centriole as a platform, leading to the recruitment of centriole biogenesis proteins such as sas-6. When overexpressed, it is able to induce centrosome amplification through the simultaneous generation of multiple procentrioles adjoining each parental centriole during S phase. Centrosome amplification following overexpression can initiate tumorigenesis, highlighting the importance of centrosome regulation in cancers. This chain is Serine/threonine-protein kinase PLK4 (SAK), found in Drosophila ananassae (Fruit fly).